The chain runs to 49 residues: Large ribosomal subunit protein bL33A (49 aa).

Belongs to the bacterial ribosomal protein bL33 family.

The sequence is that of Large ribosomal subunit protein bL33A from Bacillus cytotoxicus (strain DSM 22905 / CIP 110041 / 391-98 / NVH 391-98).